We begin with the raw amino-acid sequence, 470 residues long: Cyclic AMP receptor-like protein D (470 aa).

Over 1 to 16 (MSSCSSLSMDDRVKIG) the chain is Extracellular. A helical membrane pass occupies residues 17–37 (YGSIAGASLSIIGSIGTIILI). Topologically, residues 38–123 (KIRNKKQEKK…NNNQKTKVSH (86 aa)) are cytoplasmic. A helical membrane pass occupies residues 124 to 144 (FIINLSIANLLASIFMITIKL). The Extracellular portion of the chain corresponds to 145 to 176 (MMIHFNDKFIKVLPSTANHSFNALISVCTIGN). N-linked (GlcNAc...) asparagine glycosylation occurs at N162. A disulfide bond links C172 and C287. A helical transmembrane segment spans residues 177-197 (GVIGFSFISTFFWTLAISMYI). At 198-253 (YQQFLSSSTINSNNNNNNINNINNNNNNNINNINNSKNNNSINNFNNSNKSNKIIK) the chain is on the cytoplasmic side. A helical membrane pass occupies residues 254 to 274 (MLFYFVCWVIPFVLGSILVSG). Residues 275–295 (SRLIELNSDLPWCSIDSNIQL) lie on the Extracellular side of the membrane. A helical membrane pass occupies residues 296-316 (ISFYFPLIICLLATTFFTILI). The Cytoplasmic portion of the chain corresponds to 317-342 (KYKFSNDKLACSSSSLINLQSKIIQR). The chain crosses the membrane as a helical span at residues 343 to 363 (LILFLIVILVCWVPSLISFFI). Over 364 to 372 (SFFSKNCKQ) the chain is Extracellular. A helical membrane pass occupies residues 373-393 (FLWLEIISSTIQSCQGILNFL). Topologically, residues 394–470 (SYLSIFKKLK…DFDNNQIQEK (77 aa)) are cytoplasmic.

This sequence belongs to the G-protein coupled receptor 5 family.

The protein resides in the membrane. Functionally, receptor for cAMP. The protein is Cyclic AMP receptor-like protein D (crlD) of Dictyostelium discoideum (Social amoeba).